Reading from the N-terminus, the 248-residue chain is UDP-2,3-diacylglucosamine hydrolase (248 aa).

Mn(2+) contacts are provided by D7, H9, D40, N78, and H113. Substrate is bound at residue 78-79 (NR). Positions 121, 159, 163, 166, and 194 each coordinate substrate. 2 residues coordinate Mn(2+): H194 and H196.

Belongs to the LpxH family. The cofactor is Mn(2+).

Its subcellular location is the cell inner membrane. It carries out the reaction UDP-2-N,3-O-bis[(3R)-3-hydroxytetradecanoyl]-alpha-D-glucosamine + H2O = 2-N,3-O-bis[(3R)-3-hydroxytetradecanoyl]-alpha-D-glucosaminyl 1-phosphate + UMP + 2 H(+). It functions in the pathway glycolipid biosynthesis; lipid IV(A) biosynthesis; lipid IV(A) from (3R)-3-hydroxytetradecanoyl-[acyl-carrier-protein] and UDP-N-acetyl-alpha-D-glucosamine: step 4/6. Hydrolyzes the pyrophosphate bond of UDP-2,3-diacylglucosamine to yield 2,3-diacylglucosamine 1-phosphate (lipid X) and UMP by catalyzing the attack of water at the alpha-P atom. Involved in the biosynthesis of lipid A, a phosphorylated glycolipid that anchors the lipopolysaccharide to the outer membrane of the cell. This is UDP-2,3-diacylglucosamine hydrolase from Pseudomonas syringae pv. syringae (strain B728a).